We begin with the raw amino-acid sequence, 443 residues long: Xaa-Pro dipeptidase (443 aa).

The Mn(2+) site is built by Asp246, Asp257, His339, Glu384, and Glu423.

It belongs to the peptidase M24B family. Bacterial-type prolidase subfamily. Mn(2+) is required as a cofactor.

It catalyses the reaction Xaa-L-Pro dipeptide + H2O = an L-alpha-amino acid + L-proline. Functionally, splits dipeptides with a prolyl residue in the C-terminal position. In Klebsiella pneumoniae (strain 342), this protein is Xaa-Pro dipeptidase.